The chain runs to 409 residues: Astacin-like metalloendopeptidase (409 aa).

The N-terminal stretch at 1–19 (MDLKMLLIFIAFLLPSVLG) is a signal peptide. Over residues 30–39 (TATTESTQVT) the composition is skewed to low complexity. A disordered region spans residues 30-54 (TATTESTQVTTEEDIYDSPSPAETD). In terms of domain architecture, Peptidase M12A spans 87-285 (SAINCRNCYW…AKINRLYNCS (199 aa)). 5 disulfides stabilise this stretch: Cys91/Cys94, Cys134/Cys284, Cys155/Cys175, Cys287/Cys313, and Cys339/Cys362. A Zn(2+)-binding site is contributed by His183. Glu184 is an active-site residue. Zn(2+)-binding residues include His187 and His193. Positions 287–399 (CSTIIDAAFG…SGFQATFTSA (113 aa)) constitute a CUB domain.

Requires Zn(2+) as cofactor. In terms of tissue distribution, expressed in ovary and gonads.

The protein resides in the cytoplasm. Its subcellular location is the cell membrane. It localises to the cytoplasmic vesicle. It is found in the secretory vesicle. The protein localises to the cortical granule. In terms of biological role, probable oocyte-specific oolemmal receptor involved in sperm and egg adhesion and fertilization. May act as a protease. The polypeptide is Astacin-like metalloendopeptidase (ASTL) (Gallus gallus (Chicken)).